A 538-amino-acid chain; its full sequence is Eukaryotic translation initiation factor 3 subunit L (538 aa).

Positions 305–513 (TFSDILLYIQ…IHIADTKVSH (209 aa)) constitute a PCI domain.

The protein belongs to the eIF-3 subunit L family. Component of the eukaryotic translation initiation factor 3 (eIF-3) complex. The eIF-3 complex interacts with pix.

The protein resides in the cytoplasm. Its function is as follows. Component of the eukaryotic translation initiation factor 3 (eIF-3) complex, which is involved in protein synthesis of a specialized repertoire of mRNAs and, together with other initiation factors, stimulates binding of mRNA and methionyl-tRNAi to the 40S ribosome. The eIF-3 complex specifically targets and initiates translation of a subset of mRNAs involved in cell proliferation. The chain is Eukaryotic translation initiation factor 3 subunit L from Drosophila mojavensis (Fruit fly).